The chain runs to 121 residues: Small ribosomal subunit protein uS13 (121 aa).

The interval 91–121 (HRMSLPVRGQRTRTNARTRRGSRKTVAGRKK) is disordered. Residues 100–121 (QRTRTNARTRRGSRKTVAGRKK) are compositionally biased toward basic residues.

The protein belongs to the universal ribosomal protein uS13 family. In terms of assembly, part of the 30S ribosomal subunit. Forms a loose heterodimer with protein S19. Forms two bridges to the 50S subunit in the 70S ribosome.

Its function is as follows. Located at the top of the head of the 30S subunit, it contacts several helices of the 16S rRNA. In the 70S ribosome it contacts the 23S rRNA (bridge B1a) and protein L5 of the 50S subunit (bridge B1b), connecting the 2 subunits; these bridges are implicated in subunit movement. Contacts the tRNAs in the A and P-sites. In Prochlorococcus marinus (strain MIT 9515), this protein is Small ribosomal subunit protein uS13.